We begin with the raw amino-acid sequence, 166 residues long: Putative transmembrane protein encoded by LINC00477 (166 aa).

N-linked (GlcNAc...) asparagine glycosylation occurs at N7. A run of 3 helical transmembrane segments spans residues 15–35, 41–61, and 63–83; these read VSSFQGSPATPLSFLFFFFLC, MTGCFTFFLDFIFFFAGVLGP, and PMGMYSGASTLTGFFLLRFLG. The interval 127 to 166 is disordered; the sequence is LPVPHPPSPLSKCPQHPRPRRTKGPGLRKLWGPGPPFFPS.

It is found in the membrane. This chain is Putative transmembrane protein encoded by LINC00477 (LINC00477), found in Homo sapiens (Human).